The primary structure comprises 238 residues: Dephospho-CoA kinase (238 aa).

The DPCK domain maps to 3-233; the sequence is IIGLTGGVGT…QRPFASPPRA (231 aa). Position 11 to 16 (11 to 16) interacts with ATP; sequence GTGKST. Disordered regions lie at residues 110 to 129 and 219 to 238; these read HGVPLEEEPASQKRSGVGFS and LASAGQRPFASPPRAGYSDG.

Belongs to the CoaE family.

The protein localises to the cytoplasm. It catalyses the reaction 3'-dephospho-CoA + ATP = ADP + CoA + H(+). It participates in cofactor biosynthesis; coenzyme A biosynthesis; CoA from (R)-pantothenate: step 5/5. In terms of biological role, catalyzes the phosphorylation of the 3'-hydroxyl group of dephosphocoenzyme A to form coenzyme A. This Synechococcus sp. (strain JA-2-3B'a(2-13)) (Cyanobacteria bacterium Yellowstone B-Prime) protein is Dephospho-CoA kinase.